The chain runs to 1538 residues: Phenolphthiocerol/phthiocerol polyketide synthase subunit B (1538 aa).

A Ketosynthase family 3 (KS3) domain is found at 33–455 (AEPVAVVGIG…GTNAHVIIEQ (423 aa)). Catalysis depends on for beta-ketoacyl synthase activity residues Cys205, His340, and His377. The interval 553–882 (DGSPGPGTVF…TNLYTADIAH (330 aa)) is acyltransferase. Ser649 functions as the For malonyltransferase activity in the catalytic mechanism. 1153-1196 (SQLVIGATGNIGPHLIRQLARMGAKTIVAMARKPGALDELTQCL) provides a ligand contact to NADP(+). The interval 1153–1328 (SQLVIGATGN…TVVDWGLWKS (176 aa)) is beta-ketoacyl reductase. The region spanning 1423 to 1498 (DMLFDHVGAL…SLTDYLATVL (76 aa)) is the Carrier domain. An O-(pantetheine 4'-phosphoryl)serine modification is found at Ser1458.

The cofactor is NADP(+). It depends on pantetheine 4'-phosphate as a cofactor.

It carries out the reaction icosanoyl-[(phenol)carboxyphthiodiolenone synthase] + 2 (S)-methylmalonyl-CoA + 3 malonyl-CoA + 5 NADPH + 10 H(+) = C32-carboxyphthiodiolenone-[(phenol)carboxyphthiodiolenone synthase] + 5 CO2 + 5 NADP(+) + 5 CoA + 2 H2O. The enzyme catalyses docosanoyl-[(phenol)carboxyphthiodiolenone synthase] + 2 (S)-methylmalonyl-CoA + 3 malonyl-CoA + 5 NADPH + 10 H(+) = C34-carboxyphthiodiolenone-[(phenol)carboxyphthiodiolenone synthase] + 5 CO2 + 5 NADP(+) + 5 CoA + 2 H2O. It catalyses the reaction 17-(4-hydroxyphenyl)heptadecanoyl-[(phenol)carboxyphthiodiolenone synthase] + 2 (S)-methylmalonyl-CoA + 3 malonyl-CoA + 5 NADPH + 10 H(+) = C35-(phenol)carboxyphthiodiolenone-[(phenol)carboxyphthiodiolenone synthase] + 5 CO2 + 5 NADP(+) + 5 CoA + 2 H2O. The catalysed reaction is 19-(4-hydroxyphenyl)nonadecanoyl-[(phenol)carboxyphthiodiolenone synthase] + 2 (S)-methylmalonyl-CoA + 3 malonyl-CoA + 5 NADPH + 10 H(+) = C37-(phenol)carboxyphthiodiolenone-[(phenol)carboxyphthiodiolenone synthase] + 5 CO2 + 5 NADP(+) + 5 CoA + 2 H2O. Its pathway is lipid metabolism; fatty acid biosynthesis. In terms of biological role, part of the PpsABCDE complex involved in the biosynthesis of the lipid core common to phthiocerols and phenolphthiocerols by successive additions of malonyl-CoA or methylmalonyl-CoA extender units. PpsA can accept as substrate the activated forms of either icosanoyl (C20), docosanoyl (C22) or lignoceroyl (C24) groups from FadD26, or a (4-hydroxyphenyl)-C17 or (4-hydroxyphenyl)-C19 fatty acyl from FadD29. PpsA initiates the biosynthesis and extends its substrate using a malonyl-CoA extender unit. The PpsB and PpsC proteins add the second and third malonyl-CoA extender units. PpsD adds an (R)-methylmalonyl unit and PpsE adds a second (R)-methylmalonyl unit. The incorporation of the methylmalonyl units results in formation of two branched methyl groups in the elongated product. The sequence is that of Phenolphthiocerol/phthiocerol polyketide synthase subunit B (ppsB) from Mycobacterium tuberculosis (strain CDC 1551 / Oshkosh).